Reading from the N-terminus, the 593-residue chain is Probable 5'-nucleotidase (593 aa).

The first 21 residues, 1-21, serve as a signal peptide directing secretion; it reads MKRFIPHRVIHAVCIGLALVG. The N-palmitoyl cysteine moiety is linked to residue Cys-22. Cys-22 is lipidated: S-diacylglycerol cysteine. Asp-41, His-43, Asp-91, Asn-123, and His-224 together coordinate a divalent metal cation. Residues Phe-456 and 539–545 each bind substrate; that span reads YIARGKD.

This sequence belongs to the 5'-nucleotidase family. A divalent metal cation serves as cofactor.

The protein resides in the cell membrane. It catalyses the reaction a ribonucleoside 5'-phosphate + H2O = a ribonucleoside + phosphate. This Treponema pallidum (strain Nichols) protein is Probable 5'-nucleotidase.